Consider the following 97-residue polypeptide: Cysteine-rich and transmembrane domain-containing protein 1 (97 aa).

The segment covering 1–40 (MNQENPPPYPGPGPTAPYPPYPPQPMGPGPMGGPYPPPQG) has biased composition (pro residues). Positions 1–61 (MNQENPPPYP…QGGPQEPPKT (61 aa)) are disordered. The span at 41 to 50 (YPYQGYPQYG) shows a compositional bias: low complexity. A helical transmembrane segment spans residues 74 to 91 (LGPSTCLTACWTALCCCC).

This sequence belongs to the CYSTM1 family.

It localises to the membrane. This is Cysteine-rich and transmembrane domain-containing protein 1 (CYSTM1) from Homo sapiens (Human).